Here is a 307-residue protein sequence, read N- to C-terminus: Aspartate carbamoyltransferase catalytic subunit (307 aa).

2 residues coordinate carbamoyl phosphate: Arg-54 and Thr-55. An L-aspartate-binding site is contributed by Lys-83. Residues Arg-104, His-132, and Gln-135 each coordinate carbamoyl phosphate. L-aspartate-binding residues include Arg-165 and Arg-228. 2 residues coordinate carbamoyl phosphate: Leu-267 and Pro-268.

Belongs to the aspartate/ornithine carbamoyltransferase superfamily. ATCase family. As to quaternary structure, heterododecamer (2C3:3R2) of six catalytic PyrB chains organized as two trimers (C3), and six regulatory PyrI chains organized as three dimers (R2).

It catalyses the reaction carbamoyl phosphate + L-aspartate = N-carbamoyl-L-aspartate + phosphate + H(+). It participates in pyrimidine metabolism; UMP biosynthesis via de novo pathway; (S)-dihydroorotate from bicarbonate: step 2/3. Catalyzes the condensation of carbamoyl phosphate and aspartate to form carbamoyl aspartate and inorganic phosphate, the committed step in the de novo pyrimidine nucleotide biosynthesis pathway. The chain is Aspartate carbamoyltransferase catalytic subunit from Clostridium perfringens (strain ATCC 13124 / DSM 756 / JCM 1290 / NCIMB 6125 / NCTC 8237 / Type A).